Here is a 244-residue protein sequence, read N- to C-terminus: tRNA pseudouridine synthase A (244 aa).

The active-site Nucleophile is aspartate 52. Tyrosine 110 serves as a coordination point for substrate.

Belongs to the tRNA pseudouridine synthase TruA family. In terms of assembly, homodimer.

It catalyses the reaction uridine(38/39/40) in tRNA = pseudouridine(38/39/40) in tRNA. Formation of pseudouridine at positions 38, 39 and 40 in the anticodon stem and loop of transfer RNAs. This chain is tRNA pseudouridine synthase A, found in Clostridium botulinum (strain Eklund 17B / Type B).